A 123-amino-acid polypeptide reads, in one-letter code: Ribosome-binding factor A (123 aa).

Belongs to the RbfA family. In terms of assembly, monomer. Binds 30S ribosomal subunits, but not 50S ribosomal subunits or 70S ribosomes.

Its subcellular location is the cytoplasm. One of several proteins that assist in the late maturation steps of the functional core of the 30S ribosomal subunit. Associates with free 30S ribosomal subunits (but not with 30S subunits that are part of 70S ribosomes or polysomes). Required for efficient processing of 16S rRNA. May interact with the 5'-terminal helix region of 16S rRNA. The sequence is that of Ribosome-binding factor A from Geotalea daltonii (strain DSM 22248 / JCM 15807 / FRC-32) (Geobacter daltonii).